A 561-amino-acid chain; its full sequence is Centromere protein T (561 aa).

Residues 1–78 (MADHNPDGDP…IGRSAHVQAR (78 aa)) form a disordered region. The segment covering 18-27 (RVLDTADPRT) has biased composition (basic and acidic residues). The segment covering 45–57 (TASSRRLSGQTKT) has biased composition (polar residues). S47 bears the Phosphoserine mark. The residue at position 85 (T85) is a Phosphothreonine. Residues 93–421 (ILLTAPESSI…RHHQFPEPAP (329 aa)) form a flexible stalk domain region. Disordered regions lie at residues 114–134 (APQV…ELQL), 256–293 (HSLP…GKPA), and 314–457 (SSGV…DPHK). Polar residues predominate over residues 276–289 (RTQSSGPGLQNNSP). Residues 329-341 (GVEEAEKKMKEEG) show a composition bias toward basic and acidic residues. A phosphoserine mark is found at S343, S345, S356, S373, S385, S386, and S397. Polar residues predominate over residues 365-376 (TQVTEAEGSQGT). The span at 439–450 (RCPPRSRTTGPR) shows a compositional bias: low complexity.

Belongs to the CENP-T/CNN1 family. Component of the CENPA-CAD complex, composed of CENPI, CENPK, CENPL, CENPO, CENPP, CENPQ, CENPR and CENPS. The CENPA-CAD complex is probably recruited on centromeres by the CENPA-NAC complex, at least composed of CENPA, CENPC, CENPH, CENPM, CENPN, CENPT and CENPU. Identified in a centromeric complex containing histones H2A, H2B, H3 and H4, and at least CENPA, CENPB, CENPC, CENPT, CENPN, HJURP, SUPT16H, SSRP1 and RSF1. Interacts (via N-terminus) with the NDC80 complex. Heterodimer with CENPW; this dimer coassembles with CENPS-CENPX heterodimers at centromeres to form the tetrameric CENP-T-W-S-X complex. In terms of processing, dynamically phosphorylated during the cell cycle. Phosphorylated during G2 phase, metaphase and anaphase, but not during telophase or G1 phase.

It localises to the nucleus. The protein localises to the chromosome. The protein resides in the centromere. It is found in the kinetochore. In terms of biological role, component of the CENPA-NAC (nucleosome-associated) complex, a complex that plays a central role in assembly of kinetochore proteins, mitotic progression and chromosome segregation. The CENPA-NAC complex recruits the CENPA-CAD (nucleosome distal) complex and may be involved in incorporation of newly synthesized CENPA into centromeres. Part of a nucleosome-associated complex that binds specifically to histone H3-containing nucleosomes at the centromere, as opposed to nucleosomes containing CENPA. Component of the heterotetrameric CENP-T-W-S-X complex that binds and supercoils DNA, and plays an important role in kinetochore assembly. CENPT has a fundamental role in kinetochore assembly and function. It is one of the inner kinetochore proteins, with most further proteins binding downstream. Required for normal chromosome organization and normal progress through mitosis. This Macaca fascicularis (Crab-eating macaque) protein is Centromere protein T (CENPT).